Reading from the N-terminus, the 146-residue chain is Large ribosomal subunit protein bL21 (146 aa).

The tract at residues 96 to 146 is disordered; sequence KKKTRRKMGHRQELTRVMVKSISITNSTPKTSSKTEVKKKSTSPKASNPEN.

It belongs to the bacterial ribosomal protein bL21 family. Part of the 50S ribosomal subunit. Contacts protein L20.

Functionally, this protein binds to 23S rRNA in the presence of protein L20. The chain is Large ribosomal subunit protein bL21 from Prochlorococcus marinus subsp. pastoris (strain CCMP1986 / NIES-2087 / MED4).